The sequence spans 343 residues: Putative adenosine/adenine deaminase (343 aa).

Residues His-16, His-18, and His-204 each contribute to the Zn(2+) site. Substrate is bound at residue His-18. Glu-207 serves as the catalytic Proton donor. Asp-285 contributes to the Zn(2+) binding site. Asp-286 lines the substrate pocket.

The protein belongs to the metallo-dependent hydrolases superfamily. Adenosine and AMP deaminases family. Requires Zn(2+) as cofactor.

In terms of biological role, putative nucleoside deaminase. May catalyze the hydrolytic deamination of adenosine or some similar substrate and play a role in purine metabolism. The chain is Putative adenosine/adenine deaminase from Streptomyces coelicolor (strain ATCC BAA-471 / A3(2) / M145).